Here is a 975-residue protein sequence, read N- to C-terminus: E3 ubiquitin-protein ligase BRE1A (975 aa).

Residues 1-30 (MSGIGNKRAAGEPGTSMPPEKKAAVEDSGT) form a disordered region. K21 carries the N6-acetyllysine modification. S41 is modified (phosphoserine). Residues 43–90 (TEELDIRTLQTKNRKLAEMLDQRQAIEDELREHIEKLERRQATDDASL) are a coiled coil. Residues 125 to 155 (KALVVPEPEPDSDSNQERKDDRERGEGQEPA) form a disordered region. Residues S136 and S138 each carry the phosphoserine modification. The segment covering 139–151 (NQERKDDRERGEG) has biased composition (basic and acidic residues). Coiled-coil stretches lie at residues 168–375 (EEME…EQVV) and 429–898 (SLHK…TTKK). K348 and K510 each carry N6-acetyllysine. The segment at 507–622 (DLNKTRLRSG…GKHDDGRKKE (116 aa)) is disordered. Phosphoserine is present on S522. A compositionally biased stretch (basic and acidic residues) spans 527–540 (EDPKDEPAELKPDS). A compositionally biased stretch (low complexity) spans 543–552 (LSSQSSASKA). Residues 558–622 (NEIKSKRDEE…GKHDDGRKKE (65 aa)) show a composition bias toward basic and acidic residues. The residue at position 562 (S562) is a Phosphoserine. The segment at 922 to 961 (CPCCNMRKKDAVLTKCFHVFCFECVKTRYDTRQRKCPKCN) adopts an RING-type zinc-finger fold.

It belongs to the BRE1 family. Component of the RNF20/40 complex (also known as BRE1 complex) probably composed of 2 copies of RNF20/BRE1A and 2 copies of RNF40/BRE1B. Interacts with UBE2E1/UBCH6. Interacts with p53/TP53 and WAC. Interacts with PAF1; the interaction mediates the association of the PAF1 and RNF20/40 complexes which is a prerequsite for recruitment of UBE2A/B. Interacts with isoform 1 and isoform 2 of PA2G4. Interacts with FBXL19. In terms of assembly, (Microbial infection) Interacts with human herpesvirus 8 (KSHV) protein RTA/ORF50; this interaction targets the SMC5-SMC6 complex for proteasomal degradation. As to expression, expressed in the normal brain and also in malignant gliomas (at protein level).

It localises to the nucleus. It catalyses the reaction S-ubiquitinyl-[E2 ubiquitin-conjugating enzyme]-L-cysteine + [acceptor protein]-L-lysine = [E2 ubiquitin-conjugating enzyme]-L-cysteine + N(6)-ubiquitinyl-[acceptor protein]-L-lysine.. It participates in protein modification; protein ubiquitination. Its function is as follows. Component of the RNF20/40 E3 ubiquitin-protein ligase complex that mediates monoubiquitination of 'Lys-120' of histone H2B (H2BK120ub1). H2BK120ub1 gives a specific tag for epigenetic transcriptional activation and is also prerequisite for histone H3 'Lys-4' and 'Lys-79' methylation (H3K4me and H3K79me, respectively). It thereby plays a central role inb histone code and gene regulation. The RNF20/40 complex forms a H2B ubiquitin ligase complex in cooperation with the E2 enzyme UBE2A or UBE2B; reports about the cooperation with UBE2E1/UBCH are contradictory. Required for transcriptional activation of Hox genes. Recruited to the MDM2 promoter, probably by being recruited by p53/TP53, and thereby acts as a transcriptional coactivator. Mediates the polyubiquitination of isoform 2 of PA2G4 in cancer cells leading to its proteasome-mediated degradation. In terms of biological role, (Microbial infection) Promotes the human herpesvirus 8 (KSHV) lytic cycle by inducing the expression of lytic viral genes including the latency switch gene RTA/ORF50. The sequence is that of E3 ubiquitin-protein ligase BRE1A (RNF20) from Homo sapiens (Human).